A 632-amino-acid polypeptide reads, in one-letter code: Myrcene synthase TPS3FN, chloroplastic (632 aa).

The N-terminal 55 residues, 1–55, are a transit peptide targeting the chloroplast; sequence MHCMAVHQFSPSIVSSLPTISTYNNNHFCRFFTPKTSISPISKTKSKSSTCYPIQ. Residues Arg343, Asp380, Asp384, Arg524, and Asp527 each contribute to the (2E)-geranyl diphosphate site. Mg(2+)-binding residues include Asp380 and Asp384. The DDXXD motif signature appears at 380-384; sequence DDIYD. Residues Asp527, Thr531, and Glu535 each coordinate Mg(2+).

This sequence belongs to the terpene synthase family. Tpsb subfamily. Mg(2+) serves as cofactor. Mn(2+) is required as a cofactor. Expressed in glandular trichomes two to four weeks after flowering onset.

It is found in the plastid. The protein localises to the chloroplast. It catalyses the reaction (2E)-geranyl diphosphate = beta-myrcene + diphosphate. It functions in the pathway secondary metabolite biosynthesis; terpenoid biosynthesis. Functionally, involved in monoterpene (C10) olefins biosynthesis, constituants of cannabinoids and terpenoids-rich resins. Catalyzes strictly the conversion of (2E)-geranyl diphosphate to beta-myrcene. In Cannabis sativa (Hemp), this protein is Myrcene synthase TPS3FN, chloroplastic.